The following is a 209-amino-acid chain: MIGLVGRKVGMTRIFTEEGVSIPVTVVEVEANRVSQVKTVETDGYNAIQVTCGSKKANRVSKPEAGHFAKAGVEAGRGLWEFRLENGEEFAVGAELTVEVFNEIKKVDVTGTSKGKGFQGAVKRWNFRTQDMTHGNSLSHRAPGSIGQCQTPGRVFKGKKMAGHMGAERVTTQNLEIVRVDAERNLLLIKGAVPGSTGGNVIVKPAVKA.

The residue at position 150 (Gln150) is an N5-methylglutamine.

This sequence belongs to the universal ribosomal protein uL3 family. In terms of assembly, part of the 50S ribosomal subunit. Forms a cluster with proteins L14 and L19. Post-translationally, methylated by PrmB.

In terms of biological role, one of the primary rRNA binding proteins, it binds directly near the 3'-end of the 23S rRNA, where it nucleates assembly of the 50S subunit. The sequence is that of Large ribosomal subunit protein uL3 from Aliivibrio fischeri (strain MJ11) (Vibrio fischeri).